A 400-amino-acid chain; its full sequence is Subtilisin-like protease 11 (400 aa).

Positions 1–19 (MGLFKVIFTAVAALSAVDA) are cleaved as a signal peptide. Residues 20–117 (AELLSSAKSK…VEHDRHVYIS (98 aa)) constitute a propeptide that is removed on maturation. The region spanning 35–116 (SYLVVMKDSV…FVEHDRHVYI (82 aa)) is the Inhibitor I9 domain. The region spanning 127-400 (SWGLGRVSHR…NKLLYNGSGK (274 aa)) is the Peptidase S8 domain. Asparagine 138 carries N-linked (GlcNAc...) asparagine glycosylation. Aspartate 159 serves as the catalytic Charge relay system. An N-linked (GlcNAc...) asparagine glycan is attached at asparagine 181. Residue histidine 191 is the Charge relay system of the active site. 2 N-linked (GlcNAc...) asparagine glycosylation sites follow: asparagine 252 and asparagine 337. Catalysis depends on serine 346, which acts as the Charge relay system. N-linked (GlcNAc...) asparagine glycans are attached at residues asparagine 388 and asparagine 396.

Belongs to the peptidase S8 family.

The protein resides in the secreted. Functionally, secreted subtilisin-like serine protease with keratinolytic activity that contributes to pathogenicity. The sequence is that of Subtilisin-like protease 11 (SUB11) from Arthroderma benhamiae (strain ATCC MYA-4681 / CBS 112371) (Trichophyton mentagrophytes).